The sequence spans 415 residues: Sphingomyelin synthase-related protein 1 (415 aa).

Residues 12–78 (WTTKHVAVWL…MLSVRKLQKI (67 aa)) form the SAM domain. The next 4 helical transmembrane spans lie at 153-173 (ILSC…MVIV), 201-221 (FAMT…VLLL), 232-252 (LCSL…VTSL), and 277-297 (FAIW…GDYM). The active site involves H301. The helical transmembrane segment at 322-342 (FLHTLSWVLNLFGIFFILAAH) threads the bilayer. Residues H344 and D348 contribute to the active site. Residues 347 to 367 (IDVFIAFYITTRLFLYYHTLA) traverse the membrane as a helical segment. Residues 368–415 (NTRAYQQSRRARIWFPMFSFFECNVNGTVPNEYCWPFSKPAIMKRLIG) are Cytoplasmic-facing.

It belongs to the sphingomyelin synthase family.

Its subcellular location is the endoplasmic reticulum membrane. The enzyme catalyses an N-acylsphing-4-enine + a 1,2-diacyl-sn-glycero-3-phosphoethanolamine = an N-acylsphing-4-enine 1-phosphoethanolamine + a 1,2-diacyl-sn-glycerol. It carries out the reaction an N-acylsphinganine + a 1,2-diacyl-sn-glycero-3-phosphoethanolamine = an N-acylsphinganine-1-phosphoethanolamine + a 1,2-diacyl-sn-glycerol. The catalysed reaction is an N-acyl-(4R)-4-hydroxysphinganine + a 1,2-diacyl-sn-glycero-3-phosphoethanolamine = an N-acyl-(4R)-4-hydroxysphinganine-1-phosphoethanolamine + a 1,2-diacyl-sn-glycerol. It catalyses the reaction N-hexadecanoylsphinganine + a 1,2-diacyl-sn-glycero-3-phosphoethanolamine = N-hexadecanoyl-sphinganine-1-phosphoethanolamine + a 1,2-diacyl-sn-glycerol. The enzyme catalyses N-hexadecanoyl-(4R)-hydroxysphinganine + a 1,2-diacyl-sn-glycero-3-phosphoethanolamine = N-hexadecanoyl-(4R)-hydroxysphinganine-1-phosphoethanolamine + a 1,2-diacyl-sn-glycerol. Its pathway is sphingolipid metabolism. Its function is as follows. Synthesizes sphingolipids through transfer of a phosphatidyl head group from a glycerophospholipid on to the primary hydroxyl of a ceramide in the lumen of the endoplasmic reticulum. Catalyzes the synthesis of ceramide phosphoethanolamines (CPEs) (such as N-acylsphing-4-enine 1-phosphoethanolamine) by transferring phosphoethanolamine head group, which is smaller and more hydrophilic than the phosphocholine (PC) headgroup transferred in the canonical sphingomyelin synthesis (SMS) reaction by SMS1 or SMS2, from a phosphatidylethanolamine (1,2-diacyl-sn-glycero-3-phosphoethanolamine, PE) to a ceramide (such as N-acylsphing-4-enine). The larger PC prevents an efficient fit in the enzyme's catalytic pocket, leading to little or no SMS activity. In vitro, in the absence of ceramide, it has PLC activity with preference for phosphatidylinositol and phosphatidic acid, but also hydrolyzes phosphatidylethanolamine. The protein is Sphingomyelin synthase-related protein 1 of Homo sapiens (Human).